We begin with the raw amino-acid sequence, 213 residues long: Pyrrolidone-carboxylate peptidase (213 aa).

Active-site residues include E78, C141, and H165.

It belongs to the peptidase C15 family. Homotetramer.

It localises to the cytoplasm. It catalyses the reaction Release of an N-terminal pyroglutamyl group from a polypeptide, the second amino acid generally not being Pro.. Functionally, removes 5-oxoproline from various penultimate amino acid residues except L-proline. This is Pyrrolidone-carboxylate peptidase from Clostridium botulinum (strain Alaska E43 / Type E3).